Here is a 78-residue protein sequence, read N- to C-terminus: Large ribosomal subunit protein bL28 (78 aa).

Residues 1–21 form a disordered region; sequence MSRVCQVTGKRPMSGNNRSHA.

It belongs to the bacterial ribosomal protein bL28 family.

The sequence is that of Large ribosomal subunit protein bL28 from Photorhabdus laumondii subsp. laumondii (strain DSM 15139 / CIP 105565 / TT01) (Photorhabdus luminescens subsp. laumondii).